The chain runs to 251 residues: SRR1-like protein (251 aa).

Belongs to the SRR1 family.

It localises to the cytoplasm. Its subcellular location is the nucleus. The polypeptide is SRR1-like protein (Schizosaccharomyces pombe (strain 972 / ATCC 24843) (Fission yeast)).